Consider the following 248-residue polypeptide: Probable transcriptional regulatory protein PSPPH_3775 (248 aa).

The protein belongs to the TACO1 family.

The protein resides in the cytoplasm. The chain is Probable transcriptional regulatory protein PSPPH_3775 from Pseudomonas savastanoi pv. phaseolicola (strain 1448A / Race 6) (Pseudomonas syringae pv. phaseolicola (strain 1448A / Race 6)).